Reading from the N-terminus, the 183-residue chain is Large ribosomal subunit protein uL5 (183 aa).

The protein belongs to the universal ribosomal protein uL5 family. Part of the 50S ribosomal subunit; contacts the 5S rRNA and probably tRNA. Forms a bridge to the 30S subunit in the 70S ribosome.

This is one of the proteins that bind and probably mediate the attachment of the 5S RNA into the large ribosomal subunit, where it forms part of the central protuberance. In the 70S ribosome it contacts protein S13 of the 30S subunit (bridge B1b), connecting the 2 subunits; this bridge is implicated in subunit movement. May contact the P site tRNA; the 5S rRNA and some of its associated proteins might help stabilize positioning of ribosome-bound tRNAs. This is Large ribosomal subunit protein uL5 from Thermococcus kodakarensis (strain ATCC BAA-918 / JCM 12380 / KOD1) (Pyrococcus kodakaraensis (strain KOD1)).